We begin with the raw amino-acid sequence, 235 residues long: Dual specificity protein phosphatase 15 (235 aa).

G2 carries the N-myristoyl glycine lipid modification. The region spanning 4 to 144 (GMTKVLPGLY…LEEFGWANSQ (141 aa)) is the Tyrosine-protein phosphatase domain. C88 serves as the catalytic Phosphocysteine intermediate. Low complexity predominate over residues 183-193 (AASATTASSAA). Residues 183 to 212 (AASATTASSAAEGTLQRLVPRSPRDSHQPL) are disordered.

The protein belongs to the protein-tyrosine phosphatase family. Non-receptor class dual specificity subfamily. In terms of tissue distribution, isoform 1 is expressed in testis; predominantly in developing spermatocytes (at protein level). Isoform 2 is highly expressed in testis. Expressed in spinal cord and specifically in oligodendroglial cells. Expressed in embryonic brain cortex; down-regulated in mice with experimental autoimmune encephalomyelitis (EAE).

The protein resides in the cell membrane. The catalysed reaction is O-phospho-L-tyrosyl-[protein] + H2O = L-tyrosyl-[protein] + phosphate. It carries out the reaction O-phospho-L-seryl-[protein] + H2O = L-seryl-[protein] + phosphate. The enzyme catalyses O-phospho-L-threonyl-[protein] + H2O = L-threonyl-[protein] + phosphate. May dephosphorylate MAPK13, ATF2, ERBB3, PDGFRB and SNX6. Functionally, may play a role in the regulation of oligodendrocyte differentiation. May play a role in the regulation of myelin formation. Involved in the regulation of Erk1/2 phosphorylation in Schwann cells; the signaling may be linked to the regulation of myelination. This Mus musculus (Mouse) protein is Dual specificity protein phosphatase 15.